The following is a 728-amino-acid chain: Phosphoribosylformylglycinamidine synthase subunit PurL (728 aa).

Residue H42 is part of the active site. 2 residues coordinate ATP: Y45 and K84. A Mg(2+)-binding site is contributed by E86. Residues 87–90 (SHNH) and R109 contribute to the substrate site. The Proton acceptor role is filled by H88. Mg(2+) is bound at residue D110. A substrate-binding site is contributed by Q237. Mg(2+) is bound at residue D265. Position 309–311 (309–311 (ESQ)) interacts with substrate. ATP-binding residues include D491 and G528. Residue N529 coordinates Mg(2+). S531 is a binding site for substrate.

The protein belongs to the FGAMS family. Monomer. Part of the FGAM synthase complex composed of 1 PurL, 1 PurQ and 2 PurS subunits.

Its subcellular location is the cytoplasm. The catalysed reaction is N(2)-formyl-N(1)-(5-phospho-beta-D-ribosyl)glycinamide + L-glutamine + ATP + H2O = 2-formamido-N(1)-(5-O-phospho-beta-D-ribosyl)acetamidine + L-glutamate + ADP + phosphate + H(+). It functions in the pathway purine metabolism; IMP biosynthesis via de novo pathway; 5-amino-1-(5-phospho-D-ribosyl)imidazole from N(2)-formyl-N(1)-(5-phospho-D-ribosyl)glycinamide: step 1/2. Part of the phosphoribosylformylglycinamidine synthase complex involved in the purines biosynthetic pathway. Catalyzes the ATP-dependent conversion of formylglycinamide ribonucleotide (FGAR) and glutamine to yield formylglycinamidine ribonucleotide (FGAM) and glutamate. The FGAM synthase complex is composed of three subunits. PurQ produces an ammonia molecule by converting glutamine to glutamate. PurL transfers the ammonia molecule to FGAR to form FGAM in an ATP-dependent manner. PurS interacts with PurQ and PurL and is thought to assist in the transfer of the ammonia molecule from PurQ to PurL. This is Phosphoribosylformylglycinamidine synthase subunit PurL from Campylobacter jejuni subsp. jejuni serotype O:6 (strain 81116 / NCTC 11828).